Here is a 621-residue protein sequence, read N- to C-terminus: MTLDLAHYPLLALADTPEQLRELPQDKLKQVAKELRQYLLTSVSQSSGHFASGLGTVELTVALHYVYNTPFDRLIWDVGHQAYPHKILTGRRDRMPTIRQKNGLHPFPWPNESEYDTFAVGHSSTSISAAVGMAVAAEKEALGRKVVAVIGDGAMTAGMAFEALNHGGDIDKDMLVILNDNEMSISENVGALNSHLARLLTGNFFNSIRDGGKKLLSSVPPIKEFASRAEEHIKGMVVPGTIFEELGFNYIGPIDGHDVNGVVDTLKNMRNIKGAQILHVVTKKGKGYELAEKDPIKFHAVPKFNPSADGLPKAAPSDPTFSNIFGRWLCDMAQQDPNLMAVTPAMREGSGMVEFSQKFPAQYFDVAIAEQHAVTFAAGLAKEGQNAVVAIYSTFLQRAYDQLIHDVALQNLPVLFAIDRAGLVGADGPTHQGAFDIPFLRCIPNMVIMTPADENECRQMLYTGHKLNKPAAVRYPRGSGTGVKPDNTMQALEIGKSRTIRQGEKVAILNFGVLLPYAEKAAEVLNATVIDMRFVKPLDTEAVANVAKNHELLITLEDGATTGGAGGAVAEYLLSTVHTSRLLQIGLPDEFIMQGTQTEMYAEIGMDDAGIIAKAHTFLAQ.

Residues histidine 80 and 121–123 (GHS) each bind thiamine diphosphate. Aspartate 152 provides a ligand contact to Mg(2+). Thiamine diphosphate-binding positions include 153–154 (GA), asparagine 181, tyrosine 288, and glutamate 370. Position 181 (asparagine 181) interacts with Mg(2+).

The protein belongs to the transketolase family. DXPS subfamily. As to quaternary structure, homodimer. It depends on Mg(2+) as a cofactor. The cofactor is thiamine diphosphate.

It carries out the reaction D-glyceraldehyde 3-phosphate + pyruvate + H(+) = 1-deoxy-D-xylulose 5-phosphate + CO2. The protein operates within metabolic intermediate biosynthesis; 1-deoxy-D-xylulose 5-phosphate biosynthesis; 1-deoxy-D-xylulose 5-phosphate from D-glyceraldehyde 3-phosphate and pyruvate: step 1/1. Functionally, catalyzes the acyloin condensation reaction between C atoms 2 and 3 of pyruvate and glyceraldehyde 3-phosphate to yield 1-deoxy-D-xylulose-5-phosphate (DXP). The chain is 1-deoxy-D-xylulose-5-phosphate synthase from Pseudoalteromonas atlantica (strain T6c / ATCC BAA-1087).